The primary structure comprises 990 residues: Type III restriction-modification enzyme StyLTI Res subunit (990 aa).

Positions 50–545 are helicase-like domain; it reads NIDVKMETGT…GLRLPVDENG (496 aa). In terms of domain architecture, VRR-NUC spans 884-970; that stretch reads LLKYDYPQQV…RQNINVEFAE (87 aa). Positions 913-937 are endonuclease domain; it reads STTPDFVYRIERQDADSVYLLVETK.

Belongs to the type III restriction-modification system Res protein family. Contains two different subunits: Res and Mod. Mg(2+) is required as a cofactor. It depends on S-adenosyl-L-methionine as a cofactor.

It catalyses the reaction Endonucleolytic cleavage of DNA to give specific double-stranded fragments with terminal 5'-phosphates.. Functionally, a type III restriction enzyme that recognizes 2 inversely oriented double-stranded sequences 5'-CAGAG-3' and cleaves DNA 25-27 base pairs downstream. After binding to one recognition site undergoes random one-dimensional diffusion along DNA until it collides with a stationary enzyme bound to the second DNA site, which is when DNA cleavage occurs. DNA restriction requires both the Res and Mod subunits. This chain is Type III restriction-modification enzyme StyLTI Res subunit, found in Salmonella typhimurium (strain LT2 / SGSC1412 / ATCC 700720).